A 1167-amino-acid polypeptide reads, in one-letter code: Outer membrane protein SlpA (1167 aa).

Positions 1–22 (MKKSLIALTTALSFGLAAAQTA) are cleaved as a signal peptide. The Periplasmic segment spans residues 23 to 254 (APVSAPQVPA…RIAALERNAF (232 aa)). In terms of domain architecture, SLH spans 29-92 (QVPALTDVPA…DQMRDGETPA (64 aa)). A beta stranded membrane pass occupies residues 255-268 (SVKPSLTIGYSVSR). Topologically, residues 269–377 (TSRNFDVDRL…RNGFGFNNLA (109 aa)) are extracellular. 6 residues coordinate Cu(2+): aspartate 274, aspartate 276, arginine 305, phenylalanine 308, aspartate 310, and glutamate 381. The chain crosses the membrane as a beta stranded span at residues 378–403 (RYKEGSTDIGISLGFDTSGQFSQVTS). At 404 to 416 (GTGGSLFSTAGRL) the chain is on the periplasmic side. The beta stranded transmembrane segment at 417–428 (QVNQIDLNFGLV) threads the bilayer. Residues 429-471 (TGLPSDAYVDTNGNGKKDDGEATGRGTYLGSGGTAAILRDPAG) are Extracellular-facing. Fe(3+)-binding residues include aspartate 438, asparagine 442, lysine 444, aspartate 446, and glutamate 449. A beta stranded transmembrane segment spans residues 472 to 490 (NVYRPVFFRFKNATTQFSV). Residues 491–494 (GNNP) are Periplasmic-facing. The chain crosses the membrane as a beta stranded span at residues 495 to 500 (VIVTLG). Topologically, residues 501–519 (QQQKFYFSDYVFDNNYDGR) are extracellular. Cu(2+) contacts are provided by aspartate 513 and asparagine 515. Residues 520-528 (GDGFTVTVD) form a beta stranded membrane-spanning segment. The Periplasmic segment spans residues 529 to 540 (GSNVPVIGAWKP). A beta stranded membrane pass occupies residues 541–549 (QIKGVYGSR). Cu(2+) is bound by residues arginine 549, glycine 551, aspartate 553, and glycine 559. Residues 550–561 (SGLDGTAEAGYG) are Extracellular-facing. The chain crosses the membrane as a beta stranded span at residues 562–571 (VYYRGVRAQI). Over 572–577 (TPVGTL) the chain is Periplasmic. The chain crosses the membrane as a beta stranded span at residues 578 to 588 (TAGIHYAQEGR). The Extracellular portion of the chain corresponds to 589-601 (DMFGAAQNTTSTP). A beta stranded membrane pass occupies residues 602-615 (SDVTTYGADLHGKA). The Periplasmic portion of the chain corresponds to 616 to 617 (FG). Residues 618-630 (VELHSEYATSRVR) form a beta stranded membrane-spanning segment. Residue serine 622 coordinates deinoxanthin. The Extracellular segment spans residues 631-638 (PNTANAAV). Residues 639–649 (QTSNAFYARVA) traverse the membrane as a beta stranded segment. At 650-670 (TRKDNLAFDLNTPAAKFGNDT) the chain is on the periplasmic side. Residues 671 to 682 (FGVSLYDLNYRK) form a beta stranded membrane-spanning segment. The Extracellular segment spans residues 683–753 (IDAGYNNVAG…GTVVATNTKI (71 aa)). Position 716 (glycine 716) interacts with Cu(2+). Residues 754-766 (GQMGFGVKAAANL) traverse the membrane as a beta stranded segment. The Periplasmic segment spans residues 767 to 768 (GP). The beta stranded transmembrane segment at 769–779 (VAIGGYYDTST) threads the bilayer. Residues 780-788 (GANGDNANR) lie on the Extracellular side of the membrane. A beta stranded transmembrane segment spans residues 789–798 (MTEAGGSAKV). Residues 799 to 802 (AYSI) are Periplasmic-facing. Residues 803–814 (FSLRGTYNTLDS) form a beta stranded membrane-spanning segment. Residues 815–831 (NRPQIYRDAAGTQIIGD) lie on the Extracellular side of the membrane. The chain crosses the membrane as a beta stranded span at residues 832-843 (AKVRRYAVQADV). Topologically, residues 844-848 (TPGLG) are periplasmic. The beta stranded transmembrane segment at 849–860 (LFVGAYYRDVNV) threads the bilayer. Topologically, residues 861 to 931 (NGVRSTTDRG…DQSRTATCFT (71 aa)) are extracellular. A beta stranded membrane pass occupies residues 932–940 (SYGVEAGHA). Topologically, residues 941–949 (GDNANALVK) are periplasmic. The beta stranded transmembrane segment at 950–960 (DLFFRVGYSRV) threads the bilayer. The Extracellular segment spans residues 961-976 (YVPTTATATTGDFSGS). Residues 977–988 (VTYGDARYDRKV) form a beta stranded membrane-spanning segment. At 989–990 (GV) the chain is on the periplasmic side. The chain crosses the membrane as a beta stranded span at residues 991–1002 (ANVRLAGSFSTT). Over 1003 to 1014 (NTQLDSRPAGTR) the chain is Extracellular. The beta stranded transmembrane segment at 1015–1023 (GAVGLIVRT) threads the bilayer. The Periplasmic segment spans residues 1024-1032 (DPLENVPFR). Residues 1033 to 1046 (PQFNGQVGYYTADN) form a beta stranded membrane-spanning segment. Topologically, residues 1047–1052 (RVAAGN) are extracellular. The beta stranded transmembrane segment at 1053–1066 (YNANATKYGAGVVL) threads the bilayer. Residues 1067-1073 (NDFLLPQ) lie on the Periplasmic side of the membrane. The beta stranded transmembrane segment at 1074–1086 (TKIGVRYDGYMAQ) threads the bilayer. The Extracellular segment spans residues 1087–1108 (NRQYTPFDGDGTQGYFSDANNN). Residues 1109–1122 (RRTNLNGVYVEGAY) traverse the membrane as a beta stranded segment. At 1123–1124 (QD) the chain is on the periplasmic side. The beta stranded transmembrane segment at 1125 to 1138 (LIFSYGTYTLSQKD) threads the bilayer. Topologically, residues 1139–1153 (LNGVEYGSGINNGQP) are extracellular. The chain crosses the membrane as a beta stranded span at residues 1154 to 1166 (ARGQTFKISYKVN). Phenylalanine 1167 is a topological domain (periplasmic).

In terms of assembly, homotrimer. Part of a heterooligomeric complex resulting in the main assembly named S-layer deinoxanthin-binding complex (SDBC) which is composed of six different subunits, namely SlpA, DR_2310, DR_0505, DR_A0283, DR_A0282, and DR_A0281.

It localises to the cell envelope. The protein localises to the cell outer membrane. It catalyses the reaction L-arginine(in) = L-arginine(out). It carries out the reaction L-lysine(in) = L-lysine(out). The catalysed reaction is L-glutamate(out) = L-glutamate(in). Its function is as follows. Plays an important role in the structural organization and integrity of the cell envelope, bridging the outer membrane to the peptidoglyan layer. Is a highly abundant molecule in the D.radiodurans cell envelope but is not a fundamental component of the S-layer. Binds the carotenoid deinoxanthin, a strong protective antioxidant specific of this bacterium, and could be part of the first lane of defense against UV radiation, especially under desiccation. Appears to be a nonselective channel. Is able to transport charged amino acids such as Lys, Arg and Glu; the large dimension of the pore points toward the physiological importance of the SDBC complex in assisting and allowing the exchange of substances, including nutrients, with the surrounding environment. In Deinococcus radiodurans (strain ATCC 13939 / DSM 20539 / JCM 16871 / CCUG 27074 / LMG 4051 / NBRC 15346 / NCIMB 9279 / VKM B-1422 / R1), this protein is Outer membrane protein SlpA.